Consider the following 689-residue polypeptide: Glycine--tRNA ligase beta subunit (689 aa).

It belongs to the class-II aminoacyl-tRNA synthetase family. As to quaternary structure, tetramer of two alpha and two beta subunits.

It localises to the cytoplasm. The catalysed reaction is tRNA(Gly) + glycine + ATP = glycyl-tRNA(Gly) + AMP + diphosphate. This chain is Glycine--tRNA ligase beta subunit, found in Escherichia coli O7:K1 (strain IAI39 / ExPEC).